The primary structure comprises 105 residues: MIPGEVQVAAGDIELNVGRETLSVSVANHGDRPVQVGSHYHFFEANDALVFERAPTRGYRLDIPAGTAVRFEPGQARTVQLVAYAGKREVYGFQGKVMGALEGRA.

It belongs to the urease beta subunit family. In terms of assembly, heterotrimer of UreA (gamma), UreB (beta) and UreC (alpha) subunits. Three heterotrimers associate to form the active enzyme.

It localises to the cytoplasm. It carries out the reaction urea + 2 H2O + H(+) = hydrogencarbonate + 2 NH4(+). The protein operates within nitrogen metabolism; urea degradation; CO(2) and NH(3) from urea (urease route): step 1/1. The sequence is that of Urease subunit beta from Pseudomonas entomophila (strain L48).